The chain runs to 314 residues: Aspartate carbamoyltransferase catalytic subunit (314 aa).

Carbamoyl phosphate is bound by residues Arg-55 and Thr-56. Lys-83 provides a ligand contact to L-aspartate. Positions 105, 139, and 142 each coordinate carbamoyl phosphate. L-aspartate-binding residues include Arg-172 and Arg-226. The carbamoyl phosphate site is built by Gly-267 and Pro-268.

This sequence belongs to the aspartate/ornithine carbamoyltransferase superfamily. ATCase family. As to quaternary structure, heterododecamer (2C3:3R2) of six catalytic PyrB chains organized as two trimers (C3), and six regulatory PyrI chains organized as three dimers (R2).

The catalysed reaction is carbamoyl phosphate + L-aspartate = N-carbamoyl-L-aspartate + phosphate + H(+). It participates in pyrimidine metabolism; UMP biosynthesis via de novo pathway; (S)-dihydroorotate from bicarbonate: step 2/3. Its function is as follows. Catalyzes the condensation of carbamoyl phosphate and aspartate to form carbamoyl aspartate and inorganic phosphate, the committed step in the de novo pyrimidine nucleotide biosynthesis pathway. This Rhodococcus opacus (strain B4) protein is Aspartate carbamoyltransferase catalytic subunit.